The chain runs to 217 residues: UPF0502 protein ASA_1460 (217 aa).

The protein belongs to the UPF0502 family.

This is UPF0502 protein ASA_1460 from Aeromonas salmonicida (strain A449).